A 201-amino-acid chain; its full sequence is Recombination protein RecR (201 aa).

The segment at 57–72 adopts a C4-type zinc-finger fold; it reads CADCRTFTEQEHCTIC. One can recognise a Toprim domain in the interval 81–176; sequence GQICVVESPA…LASRIAHGVP (96 aa).

Belongs to the RecR family.

Its function is as follows. May play a role in DNA repair. It seems to be involved in an RecBC-independent recombinational process of DNA repair. It may act with RecF and RecO. This is Recombination protein RecR from Yersinia pestis bv. Antiqua (strain Antiqua).